Reading from the N-terminus, the 209-residue chain is FK506-binding protein 2B (209 aa).

The signal sequence occupies residues 1–19 (MRFSLLALLGTIVATSVSA). Positions 47–136 (GDELSMHYTG…VFEVELLEIK (90 aa)) constitute a PPIase FKBP-type domain. Residues 157–177 (FTSPSFLVSTGIIVALFLIVF) form a helical membrane-spanning segment. A coiled-coil region spans residues 178-207 (KMAKKQDIAEANEKAAAATAEASTEKKEEK). The tract at residues 190-209 (EKAAAATAEASTEKKEEKKE) is disordered. Residues 200–209 (STEKKEEKKE) show a composition bias toward basic and acidic residues.

It belongs to the FKBP-type PPIase family. FKBP2 subfamily.

It localises to the membrane. It catalyses the reaction [protein]-peptidylproline (omega=180) = [protein]-peptidylproline (omega=0). Inhibited by both FK506 and rapamycin. Functionally, PPIases accelerate the folding of proteins. It catalyzes the cis-trans isomerization of proline imidic peptide bonds in oligopeptides. The sequence is that of FK506-binding protein 2B (FKBP3) from Rhizopus delemar (strain RA 99-880 / ATCC MYA-4621 / FGSC 9543 / NRRL 43880) (Mucormycosis agent).